A 119-amino-acid chain; its full sequence is Large ribosomal subunit protein uL18 (119 aa).

The protein belongs to the universal ribosomal protein uL18 family. In terms of assembly, part of the 50S ribosomal subunit; part of the 5S rRNA/L5/L18/L25 subcomplex. Contacts the 5S and 23S rRNAs.

Functionally, this is one of the proteins that bind and probably mediate the attachment of the 5S RNA into the large ribosomal subunit, where it forms part of the central protuberance. This chain is Large ribosomal subunit protein uL18, found in Jannaschia sp. (strain CCS1).